The following is a 464-amino-acid chain: AAC-rich mRNA clone AAC11 protein (464 aa).

Positions 1 to 15 (MSTPTLPNLSQLHGI) are enriched in polar residues. 2 disordered regions span residues 1–112 (MSTP…HGTN) and 125–464 (SLPQ…SFFH). 3 stretches are compositionally biased toward low complexity: residues 16 to 65 (QNQS…QQPQ), 78 to 88 (NPNGLGLMGHN), and 130 to 160 (INNN…NNSN). A compositionally biased stretch (polar residues) spans 161 to 174 (LGINSSPTQSSANS). 3 DNA-binding regions (a.T hook) span residues 177–189 (KRSR…NPPS), 198–210 (KRKR…MDEE), and 224–236 (NKKR…PKDE). Over residues 240-253 (DYNNTSFSDSNTDG) the composition is skewed to polar residues. The a.T hook 4 DNA-binding region spans 255–267 (PKKRGRPPKAKGD). Residues 276–428 (NTLGNGILNS…NNAGNLGNLG (153 aa)) are compositionally biased toward low complexity. A compositionally biased stretch (polar residues) spans 433–464 (LHSSDPNNPNAQKSFPDSTNTMDFQPNFSFFH).

This chain is AAC-rich mRNA clone AAC11 protein (AAC11), found in Dictyostelium discoideum (Social amoeba).